A 296-amino-acid chain; its full sequence is Pantothenate synthetase (296 aa).

30–37 (MGNLHEGH) serves as a coordination point for ATP. H37 functions as the Proton donor in the catalytic mechanism. Q61 provides a ligand contact to (R)-pantoate. Residue Q61 coordinates beta-alanine. An ATP-binding site is contributed by 149-152 (GEKD). Q155 contributes to the (R)-pantoate binding site. ATP is bound by residues V178 and 186–189 (MSSR).

Belongs to the pantothenate synthetase family. As to quaternary structure, homodimer.

The protein resides in the cytoplasm. It catalyses the reaction (R)-pantoate + beta-alanine + ATP = (R)-pantothenate + AMP + diphosphate + H(+). Its pathway is cofactor biosynthesis; (R)-pantothenate biosynthesis; (R)-pantothenate from (R)-pantoate and beta-alanine: step 1/1. Its function is as follows. Catalyzes the condensation of pantoate with beta-alanine in an ATP-dependent reaction via a pantoyl-adenylate intermediate. The polypeptide is Pantothenate synthetase (Vibrio atlanticus (strain LGP32) (Vibrio splendidus (strain Mel32))).